The primary structure comprises 223 residues: Killer cell lectin-like receptor subfamily B member 1B allele B (223 aa).

The Cytoplasmic portion of the chain corresponds to 1-45; it reads MDTAVVYADLHLARTGEPKHKSPPSLSPDTCQCPRWHRLALKLGC. Residues 5-10 carry the ITIM motif motif; sequence VVYADL. The LCK-binding motif motif lies at 31-34; it reads CQCP. A helical; Signal-anchor for type II membrane protein membrane pass occupies residues 46 to 66; the sequence is ACLILLVLSVIGLGVLVLTLL. Topologically, residues 67-223 are extracellular; the sequence is QKPLIQNSPA…LKCECMCNGS (157 aa). One can recognise a C-type lectin domain in the interval 101–211; the sequence is HQDKCFHVSQ…CDSDNLWICQ (111 aa). 2 disulfides stabilise this stretch: Cys-122-Cys-210 and Cys-189-Cys-202.

In terms of assembly, homodimer; disulfide-linked. Interacts with tyrosine kinase LCK. Binds PTPN6/SHP-1 in a phosphorylation-dependent manner. Expressed in a subset of natural killer cells.

It is found in the membrane. Receptor for CLEC2D/OCIL. Ligand-binding contributes to inhibition of cytotoxic natural killer (NK) cells. May mediate MHC class I-independent 'missing-self' recognition of allografts, tumor cells and virus-infected cells. The chain is Killer cell lectin-like receptor subfamily B member 1B allele B from Rattus norvegicus (Rat).